The sequence spans 130 residues: Small ribosomal subunit protein uS8 (130 aa).

It belongs to the universal ribosomal protein uS8 family. As to quaternary structure, part of the 30S ribosomal subunit. Contacts proteins S5 and S12.

In terms of biological role, one of the primary rRNA binding proteins, it binds directly to 16S rRNA central domain where it helps coordinate assembly of the platform of the 30S subunit. The sequence is that of Small ribosomal subunit protein uS8 from Erwinia tasmaniensis (strain DSM 17950 / CFBP 7177 / CIP 109463 / NCPPB 4357 / Et1/99).